A 250-amino-acid chain; its full sequence is Recombination protein RecR (250 aa).

The segment at 56–71 adopts a C4-type zinc-finger fold; sequence CRICHNISQEDVCRIC. Residues 79 to 227 form the Toprim domain; sequence SIICVVEESK…TVTRLASGIP (149 aa). The interval 148–172 is disordered; the sequence is LGDADTPADGESSGADAAETGNAKT.

This sequence belongs to the RecR family.

Its function is as follows. May play a role in DNA repair. It seems to be involved in an RecBC-independent recombinational process of DNA repair. It may act with RecF and RecO. In Corynebacterium jeikeium (strain K411), this protein is Recombination protein RecR.